A 522-amino-acid chain; its full sequence is Signal transduction histidine-protein kinase/phosphatase MprB (522 aa).

The Cytoplasmic segment spans residues Met-1 to Leu-30. The helical transmembrane segment at Leu-31–Ile-51 threads the bilayer. The Extracellular segment spans residues Ser-52–Arg-167. The helical transmembrane segment at Trp-168 to Val-188 threads the bilayer. Over Thr-189–Arg-522 the chain is Cytoplasmic. The HAMP domain maps to Arg-190–Glu-242. Residues Asp-250 to Ser-470 form the Histidine kinase domain. His-253 is modified (phosphohistidine; by autocatalysis). The tract at residues Pro-467–Arg-522 is disordered. Over residues Thr-502–Arg-522 the composition is skewed to polar residues.

The cofactor is Mg(2+). Mn(2+) is required as a cofactor. Autophosphorylated.

It is found in the cell membrane. It carries out the reaction ATP + protein L-histidine = ADP + protein N-phospho-L-histidine.. In terms of biological role, member of the two-component regulatory system MprB/MprA which contributes to maintaining a balance among several systems involved in stress resistance and is required for establishment and maintenance of persistent infection in the host. In response to environmental signals MprB acts both as a membrane-associated protein kinase that undergoes autophosphorylation and subsequently transfers the phosphate to MprA, and a protein phosphatase that dephosphorylates phospho-MprA. This chain is Signal transduction histidine-protein kinase/phosphatase MprB (mprB), found in Mycolicibacterium paratuberculosis (strain ATCC BAA-968 / K-10) (Mycobacterium paratuberculosis).